Here is a 111-residue protein sequence, read N- to C-terminus: Putative splicing factor C222.18 (111 aa).

In terms of domain architecture, RRM spans His-18–Ser-95.

Belongs to the splicing factor SR family.

The protein resides in the nucleus. Functionally, has a role in pre-mRNA splicing where it is involved in spliceosome assembly. The sequence is that of Putative splicing factor C222.18 from Schizosaccharomyces pombe (strain 972 / ATCC 24843) (Fission yeast).